Reading from the N-terminus, the 909-residue chain is Valine--tRNA ligase (909 aa).

The 'HIGH' region signature appears at 52-62; the sequence is PNVTGVLHVGH. Residues 542-546 carry the 'KMSKS' region motif; that stretch reads KMSKS. Lys-545 contacts ATP. Positions 843-902 form a coiled coil; sequence IDIDQLKKRFEKELEKNEQNASKIDSKLKNENFVKNAPPEVIEGEKEKHAEFLRRIEKLK.

This sequence belongs to the class-I aminoacyl-tRNA synthetase family. ValS type 1 subfamily. Monomer.

It is found in the cytoplasm. The enzyme catalyses tRNA(Val) + L-valine + ATP = L-valyl-tRNA(Val) + AMP + diphosphate. Its function is as follows. Catalyzes the attachment of valine to tRNA(Val). As ValRS can inadvertently accommodate and process structurally similar amino acids such as threonine, to avoid such errors, it has a 'posttransfer' editing activity that hydrolyzes mischarged Thr-tRNA(Val) in a tRNA-dependent manner. This chain is Valine--tRNA ligase, found in Treponema denticola (strain ATCC 35405 / DSM 14222 / CIP 103919 / JCM 8153 / KCTC 15104).